Here is a 360-residue protein sequence, read N- to C-terminus: Phospho-N-acetylmuramoyl-pentapeptide-transferase (360 aa).

Transmembrane regions (helical) follow at residues 21-41 (YLSFRAIASILTALCLSLWMG), 73-93 (TMGGVMILAAIIITVLMWADL), 94-114 (SNPYVWAVLVVLAGYGAVGFV), 132-152 (WKYFWQSAIALVVAFALYAHG), 168-188 (VMPQLGLLYIVLTYFVIVGTS), 199-219 (GLAIMPTVMVAAGFAVIAWAT), 239-259 (LVVVCTAIVGAGLGFLWFNTY), 263-283 (VFMGDVGSLALGGALGVIAVL), 288-308 (LVLVIMGGVFVMETLSVILQV), and 338-358 (VIVRFWIISMVLVLVGLATLK).

Belongs to the glycosyltransferase 4 family. MraY subfamily. Mg(2+) serves as cofactor.

The protein resides in the cell inner membrane. It catalyses the reaction UDP-N-acetyl-alpha-D-muramoyl-L-alanyl-gamma-D-glutamyl-meso-2,6-diaminopimeloyl-D-alanyl-D-alanine + di-trans,octa-cis-undecaprenyl phosphate = di-trans,octa-cis-undecaprenyl diphospho-N-acetyl-alpha-D-muramoyl-L-alanyl-D-glutamyl-meso-2,6-diaminopimeloyl-D-alanyl-D-alanine + UMP. It functions in the pathway cell wall biogenesis; peptidoglycan biosynthesis. Catalyzes the initial step of the lipid cycle reactions in the biosynthesis of the cell wall peptidoglycan: transfers peptidoglycan precursor phospho-MurNAc-pentapeptide from UDP-MurNAc-pentapeptide onto the lipid carrier undecaprenyl phosphate, yielding undecaprenyl-pyrophosphoryl-MurNAc-pentapeptide, known as lipid I. This is Phospho-N-acetylmuramoyl-pentapeptide-transferase from Vibrio atlanticus (strain LGP32) (Vibrio splendidus (strain Mel32)).